Reading from the N-terminus, the 337-residue chain is Glucokinase (337 aa).

11–16 (ADIGGT) lines the ATP pocket.

This sequence belongs to the bacterial glucokinase family.

It is found in the cytoplasm. It catalyses the reaction D-glucose + ATP = D-glucose 6-phosphate + ADP + H(+). The sequence is that of Glucokinase from Xylella fastidiosa (strain M23).